Here is a 637-residue protein sequence, read N- to C-terminus: Poly(U)-binding-splicing factor hfp (637 aa).

Basic and acidic residues-rich tracts occupy residues Met1 to Ser20 and Thr28 to Asp37. A disordered region spans residues Met1–Pro41. Phosphoserine is present on residues Ser13 and Ser30. RRM domains follow at residues Cys130–Asn208 and Asn227–Thr305. Residues Arg537 to Gln627 form the RRM 3; atypical domain.

This sequence belongs to the RRM half pint family. As to quaternary structure, interacts with enc. However, given the cytoplasmic localization of enc, the relevance of such interaction is unclear. Expressed in all germline cells and within the follicle cell.

Its subcellular location is the nucleus. Splicing factor that regulates oogenesis and controls both mitosis and mRNA localization in the germline by regulating mRNA splicing of a subset of genes within the ovary. Probably acts by regulating the alternative splice site selection of the otu transcript. Also regulates the alternative splicing of eIF4E1 and grk, while it is not involved in the splicing of par-1, sqd or psq. Involved in the alternative splicing of the bicistronic pre-mRNA encoding Kdm3 and CG8176; required for the efficient production of mRNA encoding Kdm3 and Kdm3-mediated regulation of rhino-dependent piRNA production. The protein is Poly(U)-binding-splicing factor hfp of Drosophila melanogaster (Fruit fly).